Here is a 266-residue protein sequence, read N- to C-terminus: Outer membrane protein OmpK (266 aa).

The first 20 residues, 1–20, serve as a signal peptide directing secretion; it reads MRKSLLALSLLAATSAPVLA.

This sequence belongs to the nucleoside-specific channel-forming outer membrane porin (Tsx) (TC 1.B.10) family.

Its subcellular location is the cell outer membrane. Its function is as follows. Serves as receptor for a broad-host-range vibriophage, KVP40. This chain is Outer membrane protein OmpK (ompK), found in Vibrio parahaemolyticus serotype O3:K6 (strain RIMD 2210633).